The chain runs to 193 residues: Large ribosomal subunit protein uL18 (193 aa).

This sequence belongs to the universal ribosomal protein uL18 family. As to quaternary structure, part of the 50S ribosomal subunit. Contacts the 5S and 23S rRNAs.

Its function is as follows. This is one of the proteins that bind and probably mediate the attachment of the 5S RNA into the large ribosomal subunit, where it forms part of the central protuberance. The polypeptide is Large ribosomal subunit protein uL18 (Methanococcus maripaludis (strain DSM 14266 / JCM 13030 / NBRC 101832 / S2 / LL)).